A 627-amino-acid polypeptide reads, in one-letter code: Membrane protein insertase YidC (627 aa).

The chain crosses the membrane as a helical span at residues 8–28 (LFLALILSMGIWMGVNYFFFP). The span at 33 to 57 (KKNTETKQTQSDKTSENTKQQITSG) shows a compositional bias: polar residues. The interval 33–68 (KKNTETKQTQSDKTSENTKQQITSGKTKESNSADPV) is disordered. Positions 58-68 (KTKESNSADPV) are enriched in basic and acidic residues. 4 consecutive transmembrane segments (helical) span residues 417–437 (FTIP…KLVF), 488–508 (VGGC…YTAF), 536–556 (AIPY…LMVG), and 575–595 (MLMY…PSGV).

The protein belongs to the OXA1/ALB3/YidC family. Type 1 subfamily. In terms of assembly, interacts with the Sec translocase complex via SecD. Specifically interacts with transmembrane segments of nascent integral membrane proteins during membrane integration.

It is found in the cell inner membrane. In terms of biological role, required for the insertion and/or proper folding and/or complex formation of integral membrane proteins into the membrane. Involved in integration of membrane proteins that insert both dependently and independently of the Sec translocase complex, as well as at least some lipoproteins. Aids folding of multispanning membrane proteins. The chain is Membrane protein insertase YidC from Leptospira interrogans serogroup Icterohaemorrhagiae serovar copenhageni (strain Fiocruz L1-130).